The following is an 89-amino-acid chain: Dynein light chain 2, cytoplasmic (89 aa).

The protein belongs to the dynein light chain family.

It is found in the cytoplasm. The protein resides in the cytoskeleton. In terms of biological role, acts as a non-catalytic accessory component of a dynein complex. The chain is Dynein light chain 2, cytoplasmic (Cdlc2) from Drosophila melanogaster (Fruit fly).